Consider the following 561-residue polypeptide: DNA ligase B (561 aa).

K125 serves as the catalytic N6-AMP-lysine intermediate.

This sequence belongs to the NAD-dependent DNA ligase family. LigB subfamily.

It catalyses the reaction NAD(+) + (deoxyribonucleotide)n-3'-hydroxyl + 5'-phospho-(deoxyribonucleotide)m = (deoxyribonucleotide)n+m + AMP + beta-nicotinamide D-nucleotide.. Catalyzes the formation of phosphodiester linkages between 5'-phosphoryl and 3'-hydroxyl groups in double-stranded DNA using NAD as a coenzyme and as the energy source for the reaction. This chain is DNA ligase B, found in Salmonella dublin (strain CT_02021853).